A 265-amino-acid polypeptide reads, in one-letter code: Mlc titration factor A (265 aa).

The Zn(2+) site is built by His-111, His-148, His-152, and Glu-211.

It belongs to the MtfA family. Interacts with Mlc. Zn(2+) is required as a cofactor.

It localises to the cytoplasm. Its function is as follows. Involved in the modulation of the activity of the glucose-phosphotransferase system (glucose-PTS). Interacts with the transcriptional repressor Mlc, preventing its interaction with DNA and leading to the modulation of expression of genes regulated by Mlc, including ptsG, which encodes the PTS system glucose-specific EIICB component. Shows zinc-dependent metallopeptidase activity. In Escherichia coli O9:H4 (strain HS), this protein is Mlc titration factor A.